The following is a 401-amino-acid chain: Exodeoxyribonuclease 7 large subunit (401 aa).

This sequence belongs to the XseA family. In terms of assembly, heterooligomer composed of large and small subunits.

Its subcellular location is the cytoplasm. It carries out the reaction Exonucleolytic cleavage in either 5'- to 3'- or 3'- to 5'-direction to yield nucleoside 5'-phosphates.. In terms of biological role, bidirectionally degrades single-stranded DNA into large acid-insoluble oligonucleotides, which are then degraded further into small acid-soluble oligonucleotides. The protein is Exodeoxyribonuclease 7 large subunit of Clostridium botulinum (strain Langeland / NCTC 10281 / Type F).